Consider the following 370-residue polypeptide: Probable neutral protease 2 homolog ARB_03949 (370 aa).

An N-terminal signal peptide occupies residues 1 to 19; the sequence is MQLVAALAALGALVAPAVA. The propeptide occupies 20–188; it reads YPHAPMNETL…SIHSRALQKR (169 aa). 2 disulfides stabilise this stretch: C196-C267 and C274-C292. H316 is a binding site for Zn(2+). The active site involves E317. The Zn(2+) site is built by H320 and D331.

Belongs to the peptidase M35 family. Zn(2+) is required as a cofactor.

The protein resides in the secreted. It carries out the reaction Preferential cleavage of bonds with hydrophobic residues in P1'. Also 3-Asn-|-Gln-4 and 8-Gly-|-Ser-9 bonds in insulin B chain.. Its function is as follows. Probable secreted metalloprotease that shows high activities on basic nuclear substrates such as histone and protamine. May be involved in virulence. This is Probable neutral protease 2 homolog ARB_03949 from Arthroderma benhamiae (strain ATCC MYA-4681 / CBS 112371) (Trichophyton mentagrophytes).